The following is a 33-amino-acid chain: Phosphoglycerate kinase (33 aa).

An AMP-binding site is contributed by Lys13. ATP is bound at residue Lys13.

This sequence belongs to the phosphoglycerate kinase family. In terms of assembly, monomer. The cofactor is Mg(2+).

It catalyses the reaction (2R)-3-phosphoglycerate + ATP = (2R)-3-phospho-glyceroyl phosphate + ADP. The sequence is that of Phosphoglycerate kinase from Pseudotsuga menziesii (Douglas-fir).